Reading from the N-terminus, the 319-residue chain is Nucleotide-binding protein Mvan_2698 (319 aa).

Positions 1-12 are enriched in basic and acidic residues; that stretch reads MTEQGMHQELRE. The disordered stretch occupies residues 1–26; it reads MTEQGMHQELREGAGTAGDEGGLEAA. An ATP-binding site is contributed by 43-50; it reads GLSGAGRG. Residue 94–97 coordinates GTP; sequence DVRS.

The protein belongs to the RapZ-like family.

Its function is as follows. Displays ATPase and GTPase activities. This Mycolicibacterium vanbaalenii (strain DSM 7251 / JCM 13017 / BCRC 16820 / KCTC 9966 / NRRL B-24157 / PYR-1) (Mycobacterium vanbaalenii) protein is Nucleotide-binding protein Mvan_2698.